Here is a 397-residue protein sequence, read N- to C-terminus: Proteasome-activating nucleotidase (397 aa).

Positions 15 to 58 form a coiled coil; sequence DYVTFLKRRIRQLELQVRTLEADKERLERELSRLRMEMSRLRQP. ATP is bound by residues 182-187 and His-321; that span reads GCGKTL. Residues 395-397 form a docks into pockets in the proteasome alpha-ring to cause gate opening region; the sequence is MYG.

It belongs to the AAA ATPase family. Homohexamer. The hexameric complex has a two-ring architecture resembling a top hat that caps the 20S proteasome core at one or both ends. Upon ATP-binding, the C-terminus of PAN interacts with the alpha-rings of the proteasome core by binding to the intersubunit pockets.

It is found in the cytoplasm. In terms of biological role, ATPase which is responsible for recognizing, binding, unfolding and translocation of substrate proteins into the archaeal 20S proteasome core particle. Is essential for opening the gate of the 20S proteasome via an interaction with its C-terminus, thereby allowing substrate entry and access to the site of proteolysis. Thus, the C-termini of the proteasomal ATPase function like a 'key in a lock' to induce gate opening and therefore regulate proteolysis. Unfolding activity requires energy from ATP hydrolysis, whereas ATP binding alone promotes ATPase-20S proteasome association which triggers gate opening, and supports translocation of unfolded substrates. The polypeptide is Proteasome-activating nucleotidase (Thermococcus kodakarensis (strain ATCC BAA-918 / JCM 12380 / KOD1) (Pyrococcus kodakaraensis (strain KOD1))).